Reading from the N-terminus, the 444-residue chain is ATP-dependent protease ATPase subunit HslU (444 aa).

Residues I18 and 60-65 (GVGKTE) contribute to the ATP site. Residues 141 to 161 (DAWGNNEEGDNDSGTRQSFRK) form a disordered region. 3 residues coordinate ATP: D257, E322, and R394.

The protein belongs to the ClpX chaperone family. HslU subfamily. As to quaternary structure, a double ring-shaped homohexamer of HslV is capped on each side by a ring-shaped HslU homohexamer. The assembly of the HslU/HslV complex is dependent on binding of ATP.

It is found in the cytoplasm. Functionally, ATPase subunit of a proteasome-like degradation complex; this subunit has chaperone activity. The binding of ATP and its subsequent hydrolysis by HslU are essential for unfolding of protein substrates subsequently hydrolyzed by HslV. HslU recognizes the N-terminal part of its protein substrates and unfolds these before they are guided to HslV for hydrolysis. The sequence is that of ATP-dependent protease ATPase subunit HslU from Aliivibrio fischeri (strain MJ11) (Vibrio fischeri).